Consider the following 40-residue polypeptide: Large ribosomal subunit protein bL36B (40 aa).

The protein belongs to the bacterial ribosomal protein bL36 family.

The sequence is that of Large ribosomal subunit protein bL36B from Kocuria rhizophila (strain ATCC 9341 / DSM 348 / NBRC 103217 / DC2201).